A 212-amino-acid chain; its full sequence is Ras-related protein Rab-17 (212 aa).

S29 bears the Phosphoserine mark. GTP contacts are provided by G31, K32, S33, and T50. Mg(2+) is bound by residues S33, T50, and D73. The short motif at 43-54 is the Switch 1 element; that stretch reads DFKSILPTVGCA. The Switch 2 signature appears at 75–91; it reads AGQEKYHSVCHLYFRGA. G76, N132, K133, D135, and A163 together coordinate GTP. Residues C209 and C210 are each lipidated (S-geranylgeranyl cysteine).

Belongs to the small GTPase superfamily. Rab family. Mg(2+) is required as a cofactor. As to expression, expressed in melanocytes (at protein level).

The protein localises to the recycling endosome membrane. It is found in the melanosome. It localises to the cell projection. Its subcellular location is the dendrite. It carries out the reaction GTP + H2O = GDP + phosphate + H(+). Regulated by guanine nucleotide exchange factors (GEFs) which promote the exchange of bound GDP for free GTP. Regulated by GTPase activating proteins (GAPs) which increase the GTP hydrolysis activity. Inhibited by GDP dissociation inhibitors (GDIs). In terms of biological role, the small GTPases Rab are key regulators of intracellular membrane trafficking, from the formation of transport vesicles to their fusion with membranes. Rabs cycle between an inactive GDP-bound form and an active GTP-bound form that is able to recruit to membranes different set of downstream effectors directly responsible for vesicle formation, movement, tethering and fusion. RAB17 is involved in transcytosis, the directed movement of endocytosed material through the cell and its exocytosis from the plasma membrane at the opposite side. Mainly observed in epithelial cells, transcytosis mediates for instance, the transcellular transport of immunoglobulins from the basolateral surface to the apical surface. Most probably controls membrane trafficking through apical recycling endosomes in a post-endocytic step of transcytosis. Required for melanosome transport and release from melanocytes, it also regulates dendrite and dendritic spine development. May also play a role in cell migration. The protein is Ras-related protein Rab-17 of Homo sapiens (Human).